The sequence spans 232 residues: UPF0177 protein in abiGi 5'region (232 aa).

6 helical membrane passes run 12-32 (YLSL…ILAY), 47-67 (VVAT…GILI), 86-106 (LLFL…SYTY), 124-144 (SIQI…APIF), 165-185 (IVSC…LIVY), and 206-226 (ILVH…LQVI).

It belongs to the UPF0177 family.

The protein localises to the cell membrane. Functionally, the function of this protein is currently unknown, but it has been shown that it is not necessary for phage resistance. The sequence is that of UPF0177 protein in abiGi 5'region from Lactococcus lactis subsp. cremoris (Streptococcus cremoris).